Here is a 199-residue protein sequence, read N- to C-terminus: Recombination protein RecR (199 aa).

The C4-type zinc finger occupies 58–73 (CKKCFNLTSEEECDIC). Positions 81–175 (NIICVVAETK…KVTRIAYGLP (95 aa)) constitute a Toprim domain.

It belongs to the RecR family.

Its function is as follows. May play a role in DNA repair. It seems to be involved in an RecBC-independent recombinational process of DNA repair. It may act with RecF and RecO. The protein is Recombination protein RecR of Prochlorococcus marinus (strain MIT 9515).